Consider the following 4652-residue polypeptide: Low-density lipoprotein receptor-related protein 2 (4652 aa).

Residues 1–25 (MERWAAAAACTLLLAFAACLAPASG) form the signal peptide. Topologically, residues 26-4422 (RECLGNEFRC…SKGISPGTTV (4397 aa)) are extracellular. LDL-receptor class A domains follow at residues 27 to 63 (ECLG…IGCP), 66 to 104 (TCGS…QRCP), 108 to 144 (TCSS…INCR), 142 to 181 (NCRY…LNCT), 183 to 219 (RCLR…HSCS), 223 to 259 (PCKG…DGCE), and 267 to 308 (ECYP…RVCD). 21 disulfide bridges follow: cysteine 28-cysteine 40, cysteine 35-cysteine 53, cysteine 47-cysteine 62, cysteine 67-cysteine 80, cysteine 74-cysteine 93, cysteine 87-cysteine 103, cysteine 109-cysteine 121, cysteine 116-cysteine 134, cysteine 128-cysteine 143, cysteine 143-cysteine 158, cysteine 153-cysteine 171, cysteine 165-cysteine 180, cysteine 184-cysteine 196, cysteine 191-cysteine 209, cysteine 203-cysteine 218, cysteine 224-cysteine 236, cysteine 231-cysteine 249, cysteine 243-cysteine 258, cysteine 268-cysteine 281, cysteine 275-cysteine 294, and cysteine 288-cysteine 307. Residues asparagine 160 and asparagine 179 are each glycosylated (N-linked (GlcNAc...) asparagine). An N-linked (GlcNAc...) asparagine glycan is attached at asparagine 341. Positions 348–386 (DFNDCQIWGICDHFCEDRIGHHQCFCAEGYVLEHEQHCR) constitute an EGF-like 1; calcium-binding domain. Intrachain disulfides connect cysteine 352-cysteine 362, cysteine 358-cysteine 371, and cysteine 373-cysteine 385. N-linked (GlcNAc...) asparagine glycosylation occurs at asparagine 388. LDL-receptor class B repeat units follow at residues 436-478 (SKVF…DWIN), 479-521 (NKLY…DPTV), 522-568 (GYLF…DLVA), 569-613 (KRVY…FEDN), 753-795 (NAIF…DWIS), 796-837 (RNLY…HPIA), 838-881 (GYIF…DWGS), and 882-925 (SRLY…FGEY). N-linked (GlcNAc...) asparagine glycosylation occurs at asparagine 771. An N-linked (GlcNAc...) asparagine glycan is attached at asparagine 866. N-linked (GlcNAc...) asparagine glycosylation is present at asparagine 1015. An LDL-receptor class A 8 domain is found at 1025 to 1061 (QCGALSFPCNNGRCVPLHYRCDGVDDCHDNSDEVQCG). 3 disulfides stabilise this stretch: cysteine 1026-cysteine 1038, cysteine 1033-cysteine 1051, and cysteine 1045-cysteine 1060. The N-linked (GlcNAc...) asparagine glycan is linked to asparagine 1064. LDL-receptor class A domains are found at residues 1066 to 1104 (SCAP…QNCS), 1110 to 1146 (SCRA…KRCD), 1150 to 1186 (TCSP…SACV), 1188 to 1225 (NCTD…IDCP), 1231 to 1269 (MCRQ…SGCP), 1272 to 1308 (TCPX…KDCP), and 1313 to 1351 (LCPS…PLCN). Intrachain disulfides connect cysteine 1067–cysteine 1081, cysteine 1074–cysteine 1094, cysteine 1088–cysteine 1103, cysteine 1111–cysteine 1123, cysteine 1118–cysteine 1136, cysteine 1130–cysteine 1145, cysteine 1151–cysteine 1163, cysteine 1158–cysteine 1176, and cysteine 1170–cysteine 1185. Asparagine 1102 carries N-linked (GlcNAc...) asparagine glycosylation. Residues tryptophan 1128, aspartate 1131, aspartate 1133, aspartate 1135, aspartate 1141, and glutamate 1142 each contribute to the Ca(2+) site. Residue asparagine 1188 is glycosylated (N-linked (GlcNAc...) asparagine). Disulfide bonds link cysteine 1189–cysteine 1202, cysteine 1196–cysteine 1215, cysteine 1209–cysteine 1224, cysteine 1232–cysteine 1245, cysteine 1239–cysteine 1258, cysteine 1252–cysteine 1268, cysteine 1273–cysteine 1285, cysteine 1280–cysteine 1298, cysteine 1292–cysteine 1307, cysteine 1314–cysteine 1327, cysteine 1321–cysteine 1340, and cysteine 1334–cysteine 1350. Ca(2+)-binding residues include tyrosine 1207, aspartate 1210, valine 1212, aspartate 1214, aspartate 1220, and glutamate 1221. N-linked (GlcNAc...) asparagine glycosylation is present at asparagine 1329. Asparagine 1385, asparagine 1452, asparagine 1498, and asparagine 1552 each carry an N-linked (GlcNAc...) asparagine glycan. 10 LDL-receptor class B repeats span residues 1480 to 1522 (GRIF…DWVG), 1523 to 1565 (RNLY…DPRV), 1568 to 1611 (RVIF…DYPT), 1612 to 1654 (RLLY…TIFE), 1655 to 1696 (DSIY…VHPA), 1789 to 1831 (QFLY…DWLS), 1832 to 1881 (RNLY…DPAK), 1882 to 1929 (GKLY…DIQE), 1930 to 1971 (QKLY…YGPY), and 1972 to 2012 (LYYA…YRRR). N-linked (GlcNAc...) asparagine glycosylation is found at asparagine 1677 and asparagine 1809. A glycan (N-linked (GlcNAc...) asparagine) is linked at asparagine 2053. LDL-receptor class B repeat units lie at residues 2105-2154 (GFVY…DWVA), 2155-2199 (GNLY…DPKN), 2200-2243 (RYLF…DHNS), 2244-2287 (GYIY…FGNS), 2429-2475 (NRIY…DWIG), 2476-2516 (RRIY…DPCQ), 2517-2560 (GYMY…DYKE), 2561-2602 (NLLY…YGQY), and 2603-2644 (IYWT…VVNN). 2 N-linked (GlcNAc...) asparagine glycosylation sites follow: asparagine 2175 and asparagine 2222. Residue asparagine 2485 is glycosylated (N-linked (GlcNAc...) asparagine). LDL-receptor class A domains follow at residues 2696–2734 (RCNS…TLCA), 2737–2773 (TCPP…SGCR), 2776–2815 (SCNI…KNCA), 2818–2857 (TCLP…IYCV), 2860–2897 (TCKN…ATCV), 2902–2941 (TCSS…HHCE), 2944–2986 (NCSS…QNCT), 2989–3025 (NCSG…RNCK), 3028–3066 (ACDE…HLCH), and 3071–3107 (TCPP…ERCG). Disulfide bonds link cysteine 2697/cysteine 2709, cysteine 2704/cysteine 2722, cysteine 2716/cysteine 2733, cysteine 2738/cysteine 2750, cysteine 2745/cysteine 2763, cysteine 2757/cysteine 2772, cysteine 2777/cysteine 2790, cysteine 2785/cysteine 2803, cysteine 2797/cysteine 2814, cysteine 2819/cysteine 2832, cysteine 2826/cysteine 2845, cysteine 2839/cysteine 2856, cysteine 2861/cysteine 2873, cysteine 2868/cysteine 2886, cysteine 2880/cysteine 2896, cysteine 2903/cysteine 2915, cysteine 2910/cysteine 2928, and cysteine 2922/cysteine 2940. The N-linked (GlcNAc...) asparagine glycan is linked to asparagine 2698. Asparagine 2778 carries N-linked (GlcNAc...) asparagine glycosylation. Residues asparagine 2806 and asparagine 2807 are each glycosylated (N-linked (GlcNAc...) asparagine). Asparagine 2944 carries N-linked (GlcNAc...) asparagine glycosylation. 3 cysteine pairs are disulfide-bonded: cysteine 2945–cysteine 2962, cysteine 2952–cysteine 2975, and cysteine 2969–cysteine 2985. N-linked (GlcNAc...) asparagine glycosylation is found at asparagine 2984 and asparagine 2989. Cystine bridges form between cysteine 2990–cysteine 3002, cysteine 2997–cysteine 3015, cysteine 3009–cysteine 3024, cysteine 3029–cysteine 3041, cysteine 3036–cysteine 3054, cysteine 3048–cysteine 3065, cysteine 3072–cysteine 3084, cysteine 3079–cysteine 3097, and cysteine 3091–cysteine 3106. Asparagine 3122 carries an N-linked (GlcNAc...) asparagine glycan. Residues 3149-3189 (DIDECKETPSVCSQKCENLLGSYICKCAPGYTREPDGRSCR) enclose the EGF-like 2; calcium-binding domain. Cystine bridges form between cysteine 3153/cysteine 3164, cysteine 3160/cysteine 3173, and cysteine 3175/cysteine 3188. N-linked (GlcNAc...) asparagine glycosylation is found at asparagine 3208, asparagine 3254, asparagine 3312, and asparagine 3352. LDL-receptor class B repeat units follow at residues 3236 to 3278 (ERLY…DWVT), 3279 to 3321 (RKLY…DKPR), 3330 to 3373 (GYVY…DYTN), 3374 to 3417 (DLLY…FEDT), and 3418 to 3458 (IYWT…YHPY). 2 N-linked (GlcNAc...) asparagine glycosylation sites follow: asparagine 3435 and asparagine 3444. LDL-receptor class A domains follow at residues 3509-3547 (MCSS…NTCP), 3550-3588 (FCRL…VLCE), 3591-3629 (RCES…SHCA), 3632-3670 (TCLP…QECM), 3675-3713 (RCDN…QNCE), 3716-3753 (TCKP…ENCV), 3756-3792 (QCSE…RDCE), 3795-3831 (TCHP…ATCP), and 3839-3877 (YCPA…HLCL). Intrachain disulfides connect cysteine 3510/cysteine 3523, cysteine 3517/cysteine 3536, cysteine 3530/cysteine 3546, cysteine 3551/cysteine 3563, cysteine 3558/cysteine 3576, cysteine 3570/cysteine 3587, cysteine 3592/cysteine 3604, cysteine 3599/cysteine 3617, cysteine 3611/cysteine 3628, cysteine 3633/cysteine 3645, cysteine 3640/cysteine 3658, cysteine 3652/cysteine 3669, cysteine 3676/cysteine 3690, cysteine 3684/cysteine 3703, cysteine 3697/cysteine 3712, cysteine 3717/cysteine 3730, cysteine 3725/cysteine 3743, cysteine 3737/cysteine 3752, cysteine 3757/cysteine 3769, cysteine 3764/cysteine 3782, cysteine 3776/cysteine 3791, cysteine 3796/cysteine 3808, cysteine 3803/cysteine 3821, cysteine 3815/cysteine 3830, cysteine 3840/cysteine 3852, cysteine 3847/cysteine 3865, and cysteine 3859/cysteine 3876. Asparagine 3562 carries N-linked (GlcNAc...) asparagine glycosylation. Residue asparagine 3678 is glycosylated (N-linked (GlcNAc...) asparagine). Residue asparagine 3878 is glycosylated (N-linked (GlcNAc...) asparagine). 2 consecutive LDL-receptor class A domains span residues 3880 to 3919 (TCDL…ENCL) and 3925 to 3961 (PCTE…TGCN). Disulfide bonds link cysteine 3881–cysteine 3894, cysteine 3889–cysteine 3907, cysteine 3901–cysteine 3918, cysteine 3926–cysteine 3938, cysteine 3933–cysteine 3951, cysteine 3945–cysteine 3960, cysteine 3968–cysteine 3977, cysteine 3973–cysteine 3987, cysteine 3989–cysteine 4003, cysteine 4009–cysteine 4019, cysteine 4015–cysteine 4028, and cysteine 4030–cysteine 4045. An EGF-like 3 domain is found at 3964–4004 (EERSCAENLCEHNCTQLIGGGFICSCRPGFKASSLNRNSCE). Asparagine 3976 carries N-linked (GlcNAc...) asparagine glycosylation. Positions 4005 to 4046 (DINECEQFGVCPQNCHNTKGSYECTCAEGFRSMSEHYGERCA) constitute an EGF-like 4; calcium-binding domain. Residue asparagine 4066 is glycosylated (N-linked (GlcNAc...) asparagine). LDL-receptor class B repeat units follow at residues 4152 to 4194 (RHIY…NPKQ), 4195 to 4238 (GLMY…DYVN), and 4240 to 4281 (DRIY…FESQ). Asparagine 4325 carries N-linked (GlcNAc...) asparagine glycosylation. Residues 4375 to 4409 (MPPPCRCMNEGNCYFDKNNLPKCKCPSGYMGEYCE) form the EGF-like 5 domain. 3 disulfides stabilise this stretch: cysteine 4379–cysteine 4387, cysteine 4381–cysteine 4397, and cysteine 4399–cysteine 4408. A helical transmembrane segment spans residues 4423-4443 (AVLVTLILIIIIGGLVALGFF). The Cytoplasmic segment spans residues 4444–4652 (HYRKTGSILI…ANLVREDSEA (209 aa)). An SH3-binding motif is present at residues 4450-4459 (SILISMPRLP). The PxLPxI/L motif 1; mediates interaction with ANKRA2 signature appears at 4453 to 4458 (ISMPRL). Residues 4456–4461 (PRLPSL) carry the PxLPxI/L motif 2; mediates interaction with ANKRA2 motif. A Phosphoserine modification is found at serine 4460. An Endocytosis signal motif is present at residues 4518–4523 (FENPMY). A compositionally biased stretch (polar residues) spans 4536-4553 (TTTQVSESGNVYNKNYGS). The segment at 4536–4652 (TTTQVSESGN…ANLVREDSEA (117 aa)) is disordered. Serine 4568 is subject to Phosphoserine. Residues 4588–4601 (QNTNFENPIYAETE) are interaction with DAB2. Residues 4594 to 4597 (NPIY) carry the NPXY motif motif. Positions 4597–4600 (YAET) match the SH2-binding motif. The SH3-binding motif lies at 4610 to 4621 (VTPPPSPSPPAK). A Phosphoserine modification is found at serine 4615. Positions 4626 to 4636 (KGTTPAYSATE) are enriched in polar residues. Threonine 4629 carries the phosphothreonine modification. Residue serine 4650 is modified to Phosphoserine.

It belongs to the LDLR family. In terms of assembly, binds plasminogen, extracellular matrix components, plasminogen activator-plasminogen activator inhibitor type I complex, apolipoprotein E-enriched beta-VLDL, lipoprotein lipase, lactoferrin, CLU/clusterin and calcium. Forms a multimeric complex together with LRPAP1. Interacts (via PxLPxI/L motif) with ANKRA2 (via ankyrin repeats). Interacts with LRP2BP. Interacts (via NPXY motif) with DAB2; the interaction is not affected by tyrosine phosphorylation of the NPXY motif. Interacts with MB. Interacts with BMP4. Interacts with the Sonic hedgehog protein N-product which is the active product of SHH. Interacts with CST3 in a calcium-dependent manner. Interacts with the vitamin-D binding protein GC/DBP. Interacts with sex hormone-binding protein SHBG. Interacts with angiotensin-2. Also interacts with angiotensin 1-7. Interacts with APOM. Interacts with selenoprotein SEPP1. Interacts with LEP. Interacts with ALB. Interacts with the antiapoptotic protein BIRC5/survivin. Interacts with matrix metalloproteinase MMP2 in complex with metalloproteinase inhibitor TIMP1. In neurons, forms a trimeric complex with APP and APPB1/FE65. Interacts with LDLRAP1/ARH; mediates trafficking of LRP2 to the endocytic recycling compartment. Does not interact with beta-amyloid protein 40 alone but interacts with the complex composed of beta-amyloid protein 40 and CLU/APOJ. Interacts with MDK. In terms of processing, a fraction undergoes proteolytic cleavage of the extracellular domain at the cell membrane to generate a cytoplasmic tail fragment. This is internalized into the early endosome from where it trafficks in an LDLRAP1/ARH-dependent manner to the endocytic recycling compartment (ERC). In the ERC, it is further cleaved by gamma-secretase to release a fragment which translocates to the nucleus and mediates transcriptional repression. N-glycosylation is required for ligand binding.

Its subcellular location is the apical cell membrane. The protein localises to the endosome lumen. It localises to the membrane. It is found in the clathrin-coated pit. The protein resides in the cell projection. Its subcellular location is the dendrite. The protein localises to the axon. Multiligand endocytic receptor. Acts together with CUBN to mediate endocytosis of high-density lipoproteins. Mediates receptor-mediated uptake of polybasic drugs such as aprotinin, aminoglycosides and polymyxin B. In the kidney, mediates the tubular uptake and clearance of leptin. Also mediates transport of leptin across the blood-brain barrier through endocytosis at the choroid plexus epithelium. Endocytosis of leptin in neuronal cells is required for hypothalamic leptin signaling and leptin-mediated regulation of feeding and body weight. Mediates endocytosis and subsequent lysosomal degradation of CST3 in kidney proximal tubule cells. Mediates renal uptake of 25-hydroxyvitamin D3 in complex with the vitamin D3 transporter GC/DBP. Mediates renal uptake of metallothionein-bound heavy metals. Together with CUBN, mediates renal reabsorption of myoglobin. Mediates renal uptake and subsequent lysosomal degradation of APOM. Plays a role in kidney selenium homeostasis by mediating renal endocytosis of selenoprotein SEPP1. Mediates renal uptake of the antiapoptotic protein BIRC5/survivin which may be important for functional integrity of the kidney. Mediates renal uptake of matrix metalloproteinase MMP2 in complex with metalloproteinase inhibitor TIMP1. Mediates endocytosis of Sonic hedgehog protein N-product (ShhN), the active product of SHH. Also mediates ShhN transcytosis. In the embryonic neuroepithelium, mediates endocytic uptake and degradation of BMP4, is required for correct SHH localization in the ventral neural tube and plays a role in patterning of the ventral telencephalon. Required at the onset of neurulation to sequester SHH on the apical surface of neuroepithelial cells of the rostral diencephalon ventral midline and to control PTCH1-dependent uptake and intracellular trafficking of SHH. During neurulation, required in neuroepithelial cells for uptake of folate bound to the folate receptor FOLR1 which is necessary for neural tube closure. In the adult brain, negatively regulates BMP signaling in the subependymal zone which enables neurogenesis to proceed. In astrocytes, mediates endocytosis of ALB which is required for the synthesis of the neurotrophic factor oleic acid. Involved in neurite branching. During optic nerve development, required for SHH-mediated migration and proliferation of oligodendrocyte precursor cells. Mediates endocytic uptake and clearance of SHH in the retinal margin which protects retinal progenitor cells from mitogenic stimuli and keeps them quiescent. Plays a role in reproductive organ development by mediating uptake in reproductive tissues of androgen and estrogen bound to the sex hormone binding protein SHBG. Mediates endocytosis of angiotensin-2. Also mediates endocytosis of angiotensis 1-7. Binds to the complex composed of beta-amyloid protein 40 and CLU/APOJ and mediates its endocytosis and lysosomal degradation. Required for embryonic heart development. Required for normal hearing, possibly through interaction with estrogen in the inner ear. In Sus scrofa (Pig), this protein is Low-density lipoprotein receptor-related protein 2.